The chain runs to 64 residues: MFNGEEVILFPERKTIPGAPGREIHKDAPAPKRPETKKTGDRLMDRMKKVDPNQSERYRQRTGE.

Residues methionine 1–glutamate 64 are disordered. Over residues arginine 22 to glutamate 64 the composition is skewed to basic and acidic residues. Glutamate 64 participates in a covalent cross-link: Isoglutamyl lysine isopeptide (Glu-Lys) (interchain with K-? in acceptor proteins).

Belongs to the ubiquitin-like protein UBact family.

Its function is as follows. May function as a protein modifier covalently attached to lysine residues of substrate proteins. This may serve to target the modified proteins for degradation by proteasomes. The protein is Prokaryotic ubiquitin-like protein UBact of Leptospirillum ferriphilum (strain ML-04).